A 336-amino-acid chain; its full sequence is Dihydroorotate dehydrogenase (quinone) (336 aa).

FMN contacts are provided by residues 62–66 (AGLDK) and T86. Residue K66 participates in substrate binding. 111–115 (NRMGF) contacts substrate. 2 residues coordinate FMN: N139 and N172. Position 172 (N172) interacts with substrate. S175 (nucleophile) is an active-site residue. Position 177 (N177) interacts with substrate. Residues K217 and T245 each coordinate FMN. 246-247 (NT) is a binding site for substrate. FMN-binding positions include G268, G297, and 318 to 319 (YS).

It belongs to the dihydroorotate dehydrogenase family. Type 2 subfamily. In terms of assembly, monomer. FMN is required as a cofactor.

It is found in the cell membrane. It carries out the reaction (S)-dihydroorotate + a quinone = orotate + a quinol. It functions in the pathway pyrimidine metabolism; UMP biosynthesis via de novo pathway; orotate from (S)-dihydroorotate (quinone route): step 1/1. Catalyzes the conversion of dihydroorotate to orotate with quinone as electron acceptor. This Shigella flexneri serotype 5b (strain 8401) protein is Dihydroorotate dehydrogenase (quinone).